The primary structure comprises 708 residues: Capsid scaffolding protein (708 aa).

Active-site charge relay system residues include histidine 63, serine 132, and histidine 157. 3 disordered regions span residues 270-339 (SAER…MSHP), 455-565 (HPSY…QQQR), and 593-620 (ALPS…GGGE). Positions 284–293 (PAAGARVPSS) are enriched in low complexity. A compositionally biased stretch (pro residues) spans 294-311 (SPSPPVEPPSPVQPPALP). Residues 326–339 (SPSEPAEAASMSHP) show a composition bias toward low complexity. The interval 333-352 (AASMSHPLSAAVPAATAPPG) is interaction with pAP. Positions 498–513 (KQHRHGGSGGHNKRRK) are enriched in basic residues. 2 short sequence motifs (nuclear localization signal) span residues 510 to 515 (KRRKET) and 537 to 543 (RARKRLK). The span at 593 to 615 (ALPSAASSSPTTTTVCTPTSELT) shows a compositional bias: low complexity. Residues 688–708 (PPKDMVDLNRRIFVAALNKLE) are interaction with major capsid protein.

Belongs to the herpesviridae capsid scaffolding protein family. In terms of assembly, homomultimer. Interacts with major capsid protein. Exists in a monomer-dimer equilibrium with the dimer being the active species. Post-translationally, capsid scaffolding protein is cleaved by assemblin after formation of the spherical procapsid. As a result, the capsid obtains its mature, icosahedral shape. Cleavages occur at two or more sites: release (R-site) and maturation (M-site).

The protein localises to the host cytoplasm. The protein resides in the host nucleus. It catalyses the reaction Cleaves -Ala-|-Ser- and -Ala-|-Ala- bonds in the scaffold protein.. In terms of biological role, acts as a scaffold protein by binding major capsid protein in the cytoplasm, inducing the nuclear localization of both proteins. Multimerizes in the nucleus such as major capsid protein forms the icosahedral T=16 capsid. Autocatalytic cleavage releases the assembly protein, and subsequently abolishes interaction with major capsid protein. Cleavages products are evicted from the capsid before or during DNA packaging. Protease that plays an essential role in virion assembly within the nucleus. Catalyzes the cleavage of the assembly protein after formation of the spherical procapsid. By that cleavage, the capsid matures and gains its icosahedral shape. The cleavage sites seem to include -Ala-Ser-, -Ala-Ala-, as well as Ala-Thr bonds. Assemblin and cleavages products are evicted from the capsid before or during DNA packaging. Its function is as follows. Plays a major role in capsid assembly. Acts as a scaffold protein by binding major capsid protein. Multimerizes in the nucleus such as major capsid protein forms the icosahedral T=16 capsid. Cleaved by assemblin after capsid completion. The cleavages products are evicted from the capsid before or during DNA packaging. The protein is Capsid scaffolding protein (UL80) of Homo sapiens (Human).